Reading from the N-terminus, the 60-residue chain is Large ribosomal subunit protein bL32 (60 aa).

Positions 1–60 (MAVQQNKKSPSKRGMHRSHNALTVPGIAVEPTTGETHMRHHISPNGFYRGRQVLKNKSEA) are disordered. Over residues 9–19 (SPSKRGMHRSH) the composition is skewed to basic residues.

The protein belongs to the bacterial ribosomal protein bL32 family.

This Acidovorax ebreus (strain TPSY) (Diaphorobacter sp. (strain TPSY)) protein is Large ribosomal subunit protein bL32.